Reading from the N-terminus, the 291-residue chain is 4-hydroxybenzoate octaprenyltransferase (291 aa).

A run of 8 helical transmembrane segments spans residues 23–43, 47–67, 98–118, 139–159, 171–191, 216–236, 238–258, and 267–287; these read PIGTLLLLWPTLWAMWMAADG, PALVAIFVVGTVLMRSAGCAI, LAVAAVLALVAFTLILPLNAL, FFAIPQAYLGIAFGFGIPMAY, WLMLAANVLWAIAYDTAYAMV, IMLCYAGFFGIMAWVGHALAL, AAYWIGLAAAAALAGYYYTLL, and FFVFRHNNWFGACVFVGAALA.

This sequence belongs to the UbiA prenyltransferase family. Mg(2+) serves as cofactor.

Its subcellular location is the cell inner membrane. The enzyme catalyses all-trans-octaprenyl diphosphate + 4-hydroxybenzoate = 4-hydroxy-3-(all-trans-octaprenyl)benzoate + diphosphate. It participates in cofactor biosynthesis; ubiquinone biosynthesis. Catalyzes the prenylation of para-hydroxybenzoate (PHB) with an all-trans polyprenyl group. Mediates the second step in the final reaction sequence of ubiquinone-8 (UQ-8) biosynthesis, which is the condensation of the polyisoprenoid side chain with PHB, generating the first membrane-bound Q intermediate 3-octaprenyl-4-hydroxybenzoate. The chain is 4-hydroxybenzoate octaprenyltransferase from Ralstonia nicotianae (strain ATCC BAA-1114 / GMI1000) (Ralstonia solanacearum).